Reading from the N-terminus, the 309-residue chain is MAASMRMYRAVGALGLASILNPARMAAPVLVMPTRTKKRYFIPPAVGAKHKTMADMISKARAAGVVTPHETMERPINIACTAGIFDPYIPPEGDARLSSLSKEGLKQRTQQLKQTAASQLAIRKVKEYDSEFTTKTFPEKAQELFIAAHQCLTKFDRHELHTLVTERCYPEMVRGNRYRTIQWSFVESIEAPRVVQVRCPEMVSKGNLYAQVTVRMHNKQSLTIYDRFGRVMCGSEEPRDVLEYVVFERHMVNPYGTWRMHGKIVPSWAPPKEPIVKTVLLPGPAVDPLQELEDISLEKTEPVLQQWYK.

The protein belongs to the mitochondrion-specific ribosomal protein mL45 family. As to quaternary structure, component of the mitochondrial ribosome large subunit (39S) which comprises a 16S rRNA and about 50 distinct proteins.

It localises to the mitochondrion. Functionally, component of the mitochondrial large ribosomal subunit (mt-LSU). Within the mitochondrial ribosomes, required to direct the nascent polypeptide toward the tunnel exit and position the exit at a distance from the membrane surface. In Xenopus tropicalis (Western clawed frog), this protein is Large ribosomal subunit protein mL45 (mrpl45).